The sequence spans 701 residues: MNPVIKKFQFGQSTVTLETGRIARQASGAVLVTVDDDVSVLVTVVGAKQADAGKGFFPLSVHYQEKTYAAGKIPGGFFKREGRPSEKETLTSRLIDRPIRPLFPEGFMNEVQVVCTVVSTSKKIDPDIAAMIGTSAALAISGIPFDGPVGAARVAFHESTGYLLNPTYEQLQASSLDMVVAGTSEAVLMVESEAKELTEDQMLGAVLFAHDEFQVVINAIKELAAEAAKPTWDWQPKPEATALLGAIRAEFGDAISQAYTITVKADRYARLGELKDQVVAKLAVEDGSPSASEVKAAFGEIEYRTVRENIVNGKPRIDGRDTRTVRPLNIEVGVLPKTHGSALFTRGETQALVVATLGTARDAQLLDTLEGEKKDPFMLHYNFPPFSVGECGRMGGAGRREIGHGRLARRSVQAMLPGADVFPYTIRVVSEITESNGSSSMASVCGASLALMDAGVPMKAPVAGIAMGLVKEGEKFAILTDILGDEDHLGDMDFKVAGTSKGVTALQMDIKIKGITEEIMEIALGQALEARLNILGQMNQIIGQSRNELSANAPTMIAMKIDTDKIRDVIGKGGATIRAICEETKASIDIEDDGSIKIFGESKEAAEAARQRVLGITAEAEIGKIYIGKVERIVDFGAFVNILPGKDGLVHISMLSDARVEKVTDILKEGQEVEVLVLDVDNRGRIKLSIKDVAAAKASGV.

Aspartate 487 and aspartate 493 together coordinate Mg(2+). The region spanning 554 to 613 (PTMIAMKIDTDKIRDVIGKGGATIRAICEETKASIDIEDDGSIKIFGESKEAAEAARQRV) is the KH domain. The S1 motif domain occupies 623–691 (GKIYIGKVER…NRGRIKLSIK (69 aa)).

It belongs to the polyribonucleotide nucleotidyltransferase family. In terms of assembly, component of the RNA degradosome, which is a multiprotein complex involved in RNA processing and mRNA degradation. The cofactor is Mg(2+).

It is found in the cytoplasm. It carries out the reaction RNA(n+1) + phosphate = RNA(n) + a ribonucleoside 5'-diphosphate. Functionally, involved in mRNA degradation. Catalyzes the phosphorolysis of single-stranded polyribonucleotides processively in the 3'- to 5'-direction. In Pseudomonas syringae pv. syringae (strain B728a), this protein is Polyribonucleotide nucleotidyltransferase.